The sequence spans 267 residues: Undecaprenyl-diphosphatase (267 aa).

A run of 8 helical transmembrane segments spans residues 4–24, 41–61, 84–104, 116–136, 160–180, 185–205, 216–236, and 246–266; these read ILIIIILGIVEGITEFFPISS, NIQNIIKIIQIGPIFSIILLF, ILILFNLVLSCIPISILGFMF, YISYFLILGSIFFILSEFISL, CFSLLPGVSRLGITISIGLIL, YVLFKFSMILFSSIMPAVLIL, ENIFFVIIGVMSSFLTSLIFG, and TSLIIFAIYRIFIACIILFTC.

This sequence belongs to the UppP family.

Its subcellular location is the cell membrane. The catalysed reaction is di-trans,octa-cis-undecaprenyl diphosphate + H2O = di-trans,octa-cis-undecaprenyl phosphate + phosphate + H(+). In terms of biological role, catalyzes the dephosphorylation of undecaprenyl diphosphate (UPP). Confers resistance to bacitracin. The chain is Undecaprenyl-diphosphatase from Wigglesworthia glossinidia brevipalpis.